Consider the following 960-residue polypeptide: MKKNYNPKDIEEHLYNFWEKNGFFKPNNNLNKPAFCIMMPPPNITGNLHMGHAFQQTIMDILIRYNRMQGKNTLWQVGTDHAGIATQILIERQIFSEERKTKKDYSRNDFIKKIWKWKKKSNFSVKKQMKRLGNSVDWDREKFTLDPDISNSVKEAFIILYKNNLIYQKKRLVHWDSKLETVISDLEVEHRLIKSKKWFIRYPIIKNIKNINIEYLLVATTRPETLLGDTALAINPKDDKYNHLIGQSVICPIVNRIIPIIADHYADMNKDTGCVKITPGHDFNDYEVGQRHKLPMINIFTFNGKIKSNFSIYDYQGSKSNFYDSSIPTEFQNLDILSARKKIIYEIEKLGLLEKIEECNFFTPYSERSGVIIQPMLTNQWYLKTSHLSQSAIDVVREKKIKFIPNQYKSMYLSWMNNIEDWCISRQLWWGHQIPVWYDDKKNIYVGHSEKKIREEYNISDDMILNQDNDVLDTWFSSGLWTFSTLGWPEKTEFLKIFHSTDVLVSGFDIIFFWIARMIMLTMYLVKDSYGNPQIPFKDVYITGLIRDEEGKKMSKSKGNVIDPIDMIDGISLNELIEKRTSNLLQPHLSQKIRYHTIKQFPNGISATGTDALRFTFSALASNTRDIQWDMNRLKGYRNFCNKLWNASRFVLKNTKDHDYFNFSVNDNMLLINKWILIKFNNTVKSYRNSLDSYRFDIAANILYDFIWNVFCDWYLEFVKSVIKSGSYQDIYFTKNVLIHVLELLLRLSHPIMPFITEAIWQRVKIIKHIKDRTIMLQSFPEYNDQLFDKSTLSNINWIKKIIIFIRNTRSKMNISSTKLLSLFLKNINSEKKKVIQENKFILKNIASLEKISILSKQDDEPCLSLKEIIDGVDILVPVLKAIDKEIELKRLNKEIEKIKSKMLISEKKMSNQDFLSYAPKNIIDKEIKKLKSLNEIYLTLSQQLESLHDAFCKKNKIFN.

The 'HIGH' region motif lies at 42–52; the sequence is PNITGNLHMGH. A 'KMSKS' region motif is present at residues 553–557; it reads KMSKS. An ATP-binding site is contributed by K556. Residues 879-950 adopt a coiled-coil conformation; sequence VLKAIDKEIE…LSQQLESLHD (72 aa).

This sequence belongs to the class-I aminoacyl-tRNA synthetase family. ValS type 1 subfamily. Monomer.

Its subcellular location is the cytoplasm. It catalyses the reaction tRNA(Val) + L-valine + ATP = L-valyl-tRNA(Val) + AMP + diphosphate. In terms of biological role, catalyzes the attachment of valine to tRNA(Val). As ValRS can inadvertently accommodate and process structurally similar amino acids such as threonine, to avoid such errors, it has a 'posttransfer' editing activity that hydrolyzes mischarged Thr-tRNA(Val) in a tRNA-dependent manner. In Buchnera aphidicola subsp. Schizaphis graminum (strain Sg), this protein is Valine--tRNA ligase.